A 188-amino-acid chain; its full sequence is Segregation and condensation protein B (188 aa).

Belongs to the ScpB family. In terms of assembly, homodimer. Homodimerization may be required to stabilize the binding of ScpA to the Smc head domains. Component of a cohesin-like complex composed of ScpA, ScpB and the Smc homodimer, in which ScpA and ScpB bind to the head domain of Smc. The presence of the three proteins is required for the association of the complex with DNA.

The protein resides in the cytoplasm. Participates in chromosomal partition during cell division. May act via the formation of a condensin-like complex containing Smc and ScpA that pull DNA away from mid-cell into both cell halves. The sequence is that of Segregation and condensation protein B from Streptococcus gordonii (strain Challis / ATCC 35105 / BCRC 15272 / CH1 / DL1 / V288).